Consider the following 142-residue polypeptide: Large ribosomal subunit protein uL13 (142 aa).

This sequence belongs to the universal ribosomal protein uL13 family. In terms of assembly, part of the 50S ribosomal subunit.

In terms of biological role, this protein is one of the early assembly proteins of the 50S ribosomal subunit, although it is not seen to bind rRNA by itself. It is important during the early stages of 50S assembly. The polypeptide is Large ribosomal subunit protein uL13 (Ectopseudomonas mendocina (strain ymp) (Pseudomonas mendocina)).